The primary structure comprises 396 residues: S-arrestin (396 aa).

The protein belongs to the arrestin family.

Its function is as follows. Arrestin is one of the major proteins of the ros (retinal rod outer segments); it binds to photoactivated-phosphorylated rhodopsin, thereby apparently preventing the transducin-mediated activation of phosphodiesterase. The protein is S-arrestin of Aquarana catesbeiana (American bullfrog).